Consider the following 116-residue polypeptide: Large ribosomal subunit protein bL17 (116 aa).

Belongs to the bacterial ribosomal protein bL17 family. In terms of assembly, part of the 50S ribosomal subunit. Contacts protein L32.

This Prochlorococcus marinus (strain MIT 9215) protein is Large ribosomal subunit protein bL17.